A 244-amino-acid chain; its full sequence is Kallikrein-6 (244 aa).

An N-terminal signal peptide occupies residues 1–16 (MKKLMVVLSLIAAAWA). Residues 17-21 (EEQNK) constitute a propeptide, activation peptide. The Peptidase S1 domain maps to 22 to 242 (LVHGGPCDKT…YTNWIQKTIQ (221 aa)). Cystine bridges form between Cys28–Cys157, Cys47–Cys63, Cys131–Cys231, Cys138–Cys203, Cys168–Cys182, and Cys193–Cys218. Active-site charge relay system residues include His62 and Asp106. Asn134 carries an N-linked (GlcNAc...) asparagine glycan. The active-site Charge relay system is Ser197.

Inactivated by autolytic cleavage after Arg-80. In fluids, highest levels found in milk of lactating women followed by cerebrospinal fluid, nipple aspirate fluid and breast cyst fluid. Also found in serum, seminal plasma and some amniotic fluids and breast tumor cytosolic extracts. Not detected in urine. At the tissue level, highest concentrations found in glandular tissues such as salivary glands followed by lung, colon, fallopian tube, placenta, breast, pituitary and kidney. Not detected in skin, spleen, bone, thyroid, heart, ureter, liver, muscle, endometrium, testis, pancreas, seminal vesicle, ovary, adrenals and prostate. In brain, detected in gray matter neurons (at protein level). Colocalizes with pathological inclusions such as Lewy bodies and glial cytoplasmic inclusions. Overexpressed in primary breast tumors but not expressed in metastatic tumors.

It localises to the secreted. Its subcellular location is the nucleus. The protein localises to the nucleolus. It is found in the cytoplasm. The protein resides in the mitochondrion. It localises to the microsome. Inhibited by a range of serine protease inhibitors including soybean trypsin inhibitor, benzamidine and serpins. Activated by a range of glycosaminoglycans including chondroitin sulfate, dermatan sulfate, heparan sulfate and heparin. In terms of biological role, serine protease which exhibits a preference for Arg over Lys in the substrate P1 position and for Ser or Pro in the P2 position. Shows activity against amyloid precursor protein, myelin basic protein, gelatin, casein and extracellular matrix proteins such as fibronectin, laminin, vitronectin and collagen. Degrades alpha-synuclein and prevents its polymerization, indicating that it may be involved in the pathogenesis of Parkinson disease and other synucleinopathies. May be involved in regulation of axon outgrowth following spinal cord injury. Tumor cells treated with a neutralizing KLK6 antibody migrate less than control cells, suggesting a role in invasion and metastasis. The chain is Kallikrein-6 (KLK6) from Homo sapiens (Human).